A 302-amino-acid chain; its full sequence is 33 kDa chaperonin (302 aa).

Cystine bridges form between Cys-234/Cys-236 and Cys-267/Cys-270.

This sequence belongs to the HSP33 family. Post-translationally, under oxidizing conditions two disulfide bonds are formed involving the reactive cysteines. Under reducing conditions zinc is bound to the reactive cysteines and the protein is inactive.

The protein localises to the cytoplasm. In terms of biological role, redox regulated molecular chaperone. Protects both thermally unfolding and oxidatively damaged proteins from irreversible aggregation. Plays an important role in the bacterial defense system toward oxidative stress. In Neisseria meningitidis serogroup B (strain ATCC BAA-335 / MC58), this protein is 33 kDa chaperonin.